The following is a 1018-amino-acid chain: DNA polymerase gamma (1018 aa).

This sequence belongs to the DNA polymerase type-A family. The cofactor is Mg(2+).

It localises to the mitochondrion. The enzyme catalyses DNA(n) + a 2'-deoxyribonucleoside 5'-triphosphate = DNA(n+1) + diphosphate. Functionally, involved in the replication of mitochondrial DNA. This chain is DNA polymerase gamma (mip1), found in Schizosaccharomyces pombe (strain 972 / ATCC 24843) (Fission yeast).